The chain runs to 255 residues: DNA repair protein RecO (255 aa).

This sequence belongs to the RecO family.

Functionally, involved in DNA repair and RecF pathway recombination. The polypeptide is DNA repair protein RecO (Listeria monocytogenes serotype 4b (strain CLIP80459)).